We begin with the raw amino-acid sequence, 636 residues long: LEAF RUST 10 DISEASE-RESISTANCE LOCUS RECEPTOR-LIKE PROTEIN KINASE-like 1.5 (636 aa).

A signal peptide spans 1–26; that stretch reads MSQPPWRCFSLLIFVLTIFSTKPSSA. The Extracellular portion of the chain corresponds to 27 to 257; it reads STSCSSSFHC…NNKRVNHIAV (231 aa). Residues asparagine 73, asparagine 102, asparagine 146, and asparagine 224 are each glycosylated (N-linked (GlcNAc...) asparagine). Residues 258–278 traverse the membrane as a helical segment; it reads LSLIFALTCLLLVFSVAVAIF. Residues 279-636 lie on the Cytoplasmic side of the membrane; the sequence is RSRRASFLSS…RVADDDVAKN (358 aa). Positions 324-628 constitute a Protein kinase domain; that stretch reads FDPKRKIGDG…LRRIRSHTRV (305 aa). ATP-binding positions include 330–338 and lysine 352; that span reads IGDGGFGSV. Aspartate 458 functions as the Proton acceptor in the catalytic mechanism.

It belongs to the protein kinase superfamily. Ser/Thr protein kinase family.

The protein resides in the cell membrane. The catalysed reaction is L-seryl-[protein] + ATP = O-phospho-L-seryl-[protein] + ADP + H(+). The enzyme catalyses L-threonyl-[protein] + ATP = O-phospho-L-threonyl-[protein] + ADP + H(+). The polypeptide is LEAF RUST 10 DISEASE-RESISTANCE LOCUS RECEPTOR-LIKE PROTEIN KINASE-like 1.5 (Arabidopsis thaliana (Mouse-ear cress)).